Here is a 214-residue protein sequence, read N- to C-terminus: MDLTALREEYTRHGLTRDDLEDNPFKQFEKWFQQATEAELSEPNAMSLATASAKGEPSIRTVLLKYFDEKGFVFFTNYESRKAQQIEENPHVALLFLWLPLERQVKIQGTATKVSTAESLNYFTSRPRGSQLGAWCSAQSSVISSRKLLEMKFEELKYKFQHGEIPLPSFWGGYRVKPTRFEFWQGRPNRLHDRFSYTLTETDDTTWGIHRLAP.

Residues 7–10 and Lys-65 each bind substrate; that span reads REEY. FMN contacts are provided by residues 60-65, 75-76, Arg-81, Lys-82, and Gln-104; these read RTVLLK and FT. The substrate site is built by Tyr-122, Arg-126, and Ser-130. FMN contacts are provided by residues 139–140 and Trp-184; that span reads QS. Position 190 to 192 (190 to 192) interacts with substrate; the sequence is RLH. Arg-194 serves as a coordination point for FMN.

The protein belongs to the pyridoxamine 5'-phosphate oxidase family. In terms of assembly, homodimer. The cofactor is FMN.

The catalysed reaction is pyridoxamine 5'-phosphate + O2 + H2O = pyridoxal 5'-phosphate + H2O2 + NH4(+). The enzyme catalyses pyridoxine 5'-phosphate + O2 = pyridoxal 5'-phosphate + H2O2. It functions in the pathway cofactor metabolism; pyridoxal 5'-phosphate salvage; pyridoxal 5'-phosphate from pyridoxamine 5'-phosphate: step 1/1. The protein operates within cofactor metabolism; pyridoxal 5'-phosphate salvage; pyridoxal 5'-phosphate from pyridoxine 5'-phosphate: step 1/1. In terms of biological role, catalyzes the oxidation of either pyridoxine 5'-phosphate (PNP) or pyridoxamine 5'-phosphate (PMP) into pyridoxal 5'-phosphate (PLP). The polypeptide is Pyridoxine/pyridoxamine 5'-phosphate oxidase (Crocosphaera subtropica (strain ATCC 51142 / BH68) (Cyanothece sp. (strain ATCC 51142))).